Reading from the N-terminus, the 714-residue chain is Glycine--tRNA ligase beta subunit (714 aa).

This sequence belongs to the class-II aminoacyl-tRNA synthetase family. Tetramer of two alpha and two beta subunits.

It localises to the cytoplasm. The enzyme catalyses tRNA(Gly) + glycine + ATP = glycyl-tRNA(Gly) + AMP + diphosphate. The chain is Glycine--tRNA ligase beta subunit from Rhodospirillum centenum (strain ATCC 51521 / SW).